Reading from the N-terminus, the 718-residue chain is Phenylalanine--tRNA ligase beta subunit (718 aa).

The 115-residue stretch at Leu39–Lys153 folds into the tRNA-binding domain. The B5 domain maps to Ser386–Asp460. Residues Asp438, Asp444, and Asp448 each contribute to the Mg(2+) site.

The protein belongs to the phenylalanyl-tRNA synthetase beta subunit family. Type 1 subfamily. As to quaternary structure, tetramer of two alpha and two beta subunits. The cofactor is Mg(2+).

It localises to the cytoplasm. The enzyme catalyses tRNA(Phe) + L-phenylalanine + ATP = L-phenylalanyl-tRNA(Phe) + AMP + diphosphate + H(+). The sequence is that of Phenylalanine--tRNA ligase beta subunit from Mesomycoplasma hyopneumoniae (strain J / ATCC 25934 / NCTC 10110) (Mycoplasma hyopneumoniae).